The primary structure comprises 246 residues: 5-oxoprolinase subunit A (246 aa).

This sequence belongs to the LamB/PxpA family. As to quaternary structure, forms a complex composed of PxpA, PxpB and PxpC.

It catalyses the reaction 5-oxo-L-proline + ATP + 2 H2O = L-glutamate + ADP + phosphate + H(+). In terms of biological role, catalyzes the cleavage of 5-oxoproline to form L-glutamate coupled to the hydrolysis of ATP to ADP and inorganic phosphate. The sequence is that of 5-oxoprolinase subunit A from Cupriavidus metallidurans (strain ATCC 43123 / DSM 2839 / NBRC 102507 / CH34) (Ralstonia metallidurans).